We begin with the raw amino-acid sequence, 230 residues long: 7-cyano-7-deazaguanine synthase (230 aa).

16–26 (LSGGLDSATVV) lines the ATP pocket. Zn(2+) is bound by residues C195, C205, C208, and C211.

It belongs to the QueC family. Zn(2+) serves as cofactor.

It catalyses the reaction 7-carboxy-7-deazaguanine + NH4(+) + ATP = 7-cyano-7-deazaguanine + ADP + phosphate + H2O + H(+). It participates in purine metabolism; 7-cyano-7-deazaguanine biosynthesis. In terms of biological role, catalyzes the ATP-dependent conversion of 7-carboxy-7-deazaguanine (CDG) to 7-cyano-7-deazaguanine (preQ(0)). The sequence is that of 7-cyano-7-deazaguanine synthase from Pseudomonas fluorescens (strain Pf0-1).